Here is a 372-residue protein sequence, read N- to C-terminus: L-selectin (372 aa).

The first 28 residues, 1 to 28 (MIFPRKCQSTQRDLWNIFKLWGWTMLCC), serve as a signal peptide directing secretion. The propeptide occupies 29 to 38 (DFLAHHGTDC). The Extracellular segment spans residues 39 to 332 (WTYHYSENPM…FSMIKEGDYN (294 aa)). The region spanning 55 to 155 (RFCRENYTDL…ACHKPKAALC (101 aa)) is the C-type lectin domain. 10 disulfides stabilise this stretch: Cys57/Cys155, Cys128/Cys147, Cys128/Cys160, Cys160/Cys171, Cys165/Cys180, Cys182/Cys191, Cys197/Cys241, Cys227/Cys254, Cys259/Cys303, and Cys289/Cys316. Residues Asn60 and Asn104 are each glycosylated (N-linked (GlcNAc...) asparagine). Ca(2+) contacts are provided by Glu118, Asn120, Glu126, Asn143, and Asp144. One can recognise an EGF-like domain in the interval 156–192 (YTASCQPWSCSGHGECVEIINNYTCNCDVGYYGPQCQ). N-linked (GlcNAc...) asparagine glycosylation occurs at Asn177. Sushi domains are found at residues 195-256 (IQCE…TCQV) and 257-318 (IQCE…ICQK). N-linked (GlcNAc...) asparagine glycosylation is found at Asn226, Asn232, Asn246, and Asn271. A helical transmembrane segment spans residues 333-355 (PLFIPVAVMVTAFSGLAFIIWLA). At 356–372 (RRLKKGKKSKKSMDDPY) the chain is on the cytoplasmic side.

This sequence belongs to the selectin/LECAM family. Interaction with SELPLG/PSGL1 and PODXL2 is required for promoting recruitment and rolling of leukocytes. This interaction is dependent on the sialyl Lewis X glycan modification of SELPLG and PODXL2, and tyrosine sulfation modifications of SELPLG. Sulfation on 'Tyr-51' of SELPLG is important for L-selectin binding. In terms of processing, N-glycosylated.

The protein localises to the cell membrane. Its function is as follows. Calcium-dependent lectin that mediates cell adhesion by binding to glycoproteins on neighboring cells. Mediates the adherence of lymphocytes to endothelial cells of high endothelial venules in peripheral lymph nodes. Promotes initial tethering and rolling of leukocytes in endothelia. This is L-selectin (SELL) from Macaca mulatta (Rhesus macaque).